Here is a 426-residue protein sequence, read N- to C-terminus: D-tagatose-1,6-bisphosphate aldolase subunit KbaZ (426 aa).

Belongs to the GatZ/KbaZ family. KbaZ subfamily. Forms a complex with KbaY.

Its pathway is carbohydrate metabolism; D-tagatose 6-phosphate degradation; D-glyceraldehyde 3-phosphate and glycerone phosphate from D-tagatose 6-phosphate: step 2/2. Functionally, component of the tagatose-1,6-bisphosphate aldolase KbaYZ that is required for full activity and stability of the Y subunit. Could have a chaperone-like function for the proper and stable folding of KbaY. When expressed alone, KbaZ does not show any aldolase activity. This Escherichia coli O139:H28 (strain E24377A / ETEC) protein is D-tagatose-1,6-bisphosphate aldolase subunit KbaZ.